Reading from the N-terminus, the 1231-residue chain is MSFLPGEPVPPGFEEDVSRTAVIQKQIESYTAGPLIGTEYTIELHEPAQLRPNYFCVLCQTCSDGRNVFVHWTSQAHRTKYLQTHFQKAYKELQKLKRTPNSSGDLVTATGNLVKCIEKHFGRSRNLITATGDDFRRYRSKMCSQVRDSFHFDECAGSDFSEEAQRVIRELKPDESIKSSMKKNVDGTGDSNKQHDDGNIIALDAISSDDESFGGSTASVVPVPKGRQKNNLSEDAGGRSKNQSPPPAGGVNKTQHLPTPKELAIQASKISQERYKWEKFRCMLEIQLKQLRSDTEMYESNPEKHPDYPDEWKQFWNRRYKQLQEEKKCDPNQYDYKPEWISYWKDRRIVLFDIAVNKIKKDLKEKFKLGDEDEEKTLELMERYKIRVASPRRAPATTNSDNCRKTKPNFRNNRPIVATSKLPDAVIDISDDDVDSPPSRSRHSHKRRSISRSLSPKRGGRRAVRRSRSRSPRRSYNRGSTRSRSRSMRHRSRSPAHYRGRGRGREPASKERGSSSRDFGGRHSLQRERERSSEYYHRNEGYARSSRGYESVETFRVLDSRVYPEYKVTKTSSISPTASSNKEKEKEASEPIEEGPLTVVSVLRMLSAVEEHLGSLGPKALNLLSKALAMELVKPNAAEDLLRNEDNCVFLETTKEKLKGILIAEVLDDPQKVRVIKKLITNIAEIIYQATFKGTNDAVDVKVKANANPAPIQLPFDRNLVAPKLANALVLNGYNNVSTGDMNNLLHMLTLLMKTDKQRRQLDNNNGLKFEEIKVKLGLQNNPSPDDMGIDLDELMKEVEHQLHKESVDIVNKPTGAPAKVQAADTVGGSTGLESLTDSDLQTLLQNFKFLSNEEQVHLIGHLRKLEVQDPSRVDRLRKYVNLVELRGDGESCSDFLARVVKIGGASKAKPATKFKASVMGGRTSSAMAASSASATAPKVGHSMLSAQRPNLDRDMSSMPINKQRRGRNTPSIMLDDDDEEDDDYNFDDLVMKACDSNGSASAGGGGGVVGAGVHNKPGVPPIIGVESSPNALTFKPAAATKISLKDTENIIANLMGTLSKNGTSGGSPVGGNRNYMMNQQHGAPNAQNAPNLGQNPGQNLGQKQPGAGYSNAGYPGQQQQQQQQQQHGRNFGQEAQPLMSGLSGGPNANHYPNQQGYGGYHPFAGNGVQQNYGGMVPPGPGGYVGPPPNPWASNVPPQPPFNQMPQNFMGAQQQQQQQQPHFNNMFGGRH.

3 disordered regions span residues Leu171–Asp197, Asp210–Thr259, and Ala389–Arg547. Over residues Arg440–Ile450 the composition is skewed to basic residues. A phosphoserine mark is found at Ser449, Ser451, Ser453, and Ser455. The segment covering Arg458–Gly502 has biased composition (basic residues). The span at Arg503–Gly541 shows a compositional bias: basic and acidic residues. At Tyr549 the chain carries Phosphotyrosine. Disordered regions lie at residues Lys570–Pro591, Pro950–Glu981, and Thr1058–Asn1203. Phosphoserine is present on residues Ser573 and Ser589. Thr970 carries the post-translational modification Phosphothreonine. Ser972 carries the post-translational modification Phosphoserine. Residues Tyr1076–Gln1103 are compositionally biased toward polar residues. The span at Gln1118–Gln1127 shows a compositional bias: low complexity. Pro residues predominate over residues Pro1178–Asn1203.

This is an uncharacterized protein from Drosophila melanogaster (Fruit fly).